The primary structure comprises 423 residues: D-tagatose-1,6-bisphosphate aldolase subunit GatZ (423 aa).

The protein belongs to the GatZ/KbaZ family. GatZ subfamily. As to quaternary structure, forms a complex with GatY.

It functions in the pathway carbohydrate metabolism; D-tagatose 6-phosphate degradation; D-glyceraldehyde 3-phosphate and glycerone phosphate from D-tagatose 6-phosphate: step 2/2. Its function is as follows. Component of the tagatose-1,6-bisphosphate aldolase GatYZ that is required for full activity and stability of the Y subunit. Could have a chaperone-like function for the proper and stable folding of GatY. When expressed alone, GatZ does not show any aldolase activity. Is involved in the catabolism of galactitol. The polypeptide is D-tagatose-1,6-bisphosphate aldolase subunit GatZ (Salmonella heidelberg (strain SL476)).